A 242-amino-acid chain; its full sequence is Methylthioribulose-1-phosphate dehydratase (242 aa).

Position 87 is a phosphoserine (Ser-87). Cys-97 provides a ligand contact to substrate. Residues His-115 and His-117 each coordinate Zn(2+). The active-site Proton donor/acceptor is Glu-139. His-195 contributes to the Zn(2+) binding site.

The protein belongs to the aldolase class II family. MtnB subfamily. In terms of assembly, homotetramer. Interacts with APAF1. May interact with CASP1. Requires Zn(2+) as cofactor. As to expression, isoform 1 is ubiquitously expressed. Isoform 2 is expressed at lower levels and detected in heart, brain, pancreas, liver, placenta, skeletal muscle and kidney.

It localises to the cytoplasm. It carries out the reaction 5-(methylsulfanyl)-D-ribulose 1-phosphate = 5-methylsulfanyl-2,3-dioxopentyl phosphate + H2O. The protein operates within amino-acid biosynthesis; L-methionine biosynthesis via salvage pathway; L-methionine from S-methyl-5-thio-alpha-D-ribose 1-phosphate: step 2/6. Functionally, catalyzes the dehydration of methylthioribulose-1-phosphate (MTRu-1-P) into 2,3-diketo-5-methylthiopentyl-1-phosphate (DK-MTP-1-P). Functions in the methionine salvage pathway, which plays a key role in cancer, apoptosis, microbial proliferation and inflammation. May inhibit the CASP1-related inflammatory response (pyroptosis), the CASP9-dependent apoptotic pathway and the cytochrome c-dependent and APAF1-mediated cell death. This Homo sapiens (Human) protein is Methylthioribulose-1-phosphate dehydratase.